Reading from the N-terminus, the 461-residue chain is mRNA cap guanine-N(7) methyltransferase (461 aa).

Positions 1–117 (MESSVKASVD…RKLQPQDALE (117 aa)) are disordered. Residues S11, S15, S16, and S58 each carry the phosphoserine modification. Composition is skewed to polar residues over residues 14–29 (ESSP…SGQR) and 49–58 (EQNSSYVQDS). Basic and acidic residues predominate over residues 65–93 (LDVEIILDEKHSEDDGGASKRSKLERGGG). Residues S94 and S99 each carry the phosphoserine modification. The Nuclear localization signal motif lies at 107–109 (KRK). Positions 152–460 (SRIFYLRNFN…IYLVFAFEKQ (309 aa)) constitute an mRNA cap 0 methyltransferase domain. MRNA is bound at residue 161 to 162 (NN). Residues K165, G190, D212, D246, Q269, and Y274 each contribute to the S-adenosyl-L-methionine site.

The protein belongs to the class I-like SAM-binding methyltransferase superfamily. mRNA cap 0 methyltransferase family. As to quaternary structure, interacts with importin alpha, leading to stimulate both RNA-binding and methyltransferase activity. Interaction with importin alpha and beta is required for its nuclear localization, importin beta dissociating in response to RanGTP, allowing RNMT-importin alpha to bind RNA substrates. Interacts with elongating form of polymerase II and RNGTT. Interacts with RAMAC, this interaction significantly enhances RNA-binding and cap methyltransferase activity.

It is found in the nucleus. It catalyses the reaction a 5'-end (5'-triphosphoguanosine)-ribonucleoside in mRNA + S-adenosyl-L-methionine = a 5'-end (N(7)-methyl 5'-triphosphoguanosine)-ribonucleoside in mRNA + S-adenosyl-L-homocysteine. With respect to regulation, methyltransferase activity is activated by RAMAC. In terms of biological role, catalytic subunit of the mRNA-capping methyltransferase RNMT:RAMAC complex that methylates the N7 position of the added guanosine to the 5'-cap structure of mRNAs. Binds RNA containing 5'-terminal GpppC. In Rattus norvegicus (Rat), this protein is mRNA cap guanine-N(7) methyltransferase (Rnmt).